The chain runs to 402 residues: Zinc finger protein 586 (402 aa).

In terms of domain architecture, KRAB spans 15–87 (VTFEDVAVNF…DQGGHSGERP (73 aa)). Residues 88-116 (YECGEYRKLFKNKSCLTEPRRDHKHRNVR) form a C2H2-type 1; degenerate zinc finger. Residues 122–144 (YECSKYGKLFHQKPTLHIHERFH) form a C2H2-type 2; degenerate zinc finger. A C2H2-type 3; degenerate zinc finger spans residues 150 to 172 (YECSECGKSFHQSSSLLQRQTLH). C2H2-type zinc fingers lie at residues 178-200 (YECIECGKAFAEKSSLINHRKVH), 206-228 (YECNECGKSFAYTSSLIKHRRIH), 234-256 (YECSECGRSFAENSSLIKHLRVH), 262-284 (YECVECGKSFRRSSSLLQHQRVH), 290-312 (YECSECGKSFSLRSNLIHHQRVH), 317-339 (HECGQCGKSFSRKSSLIIHLRVH), 345-367 (YECSDCGKSFAENSSLIKHLRVH), and 373-395 (YECIDCGKSFRHSSSFRRHQRVH).

The protein belongs to the krueppel C2H2-type zinc-finger protein family.

The protein localises to the nucleus. In terms of biological role, may be involved in transcriptional regulation. This Homo sapiens (Human) protein is Zinc finger protein 586 (ZNF586).